The chain runs to 562 residues: Cytosolic invertase 1 (562 aa).

This sequence belongs to the glycosyl hydrolase 100 family.

The protein localises to the cytoplasm. It is found in the cytosol. The enzyme catalyses Hydrolysis of terminal non-reducing beta-D-fructofuranoside residues in beta-D-fructofuranosides.. Functionally, cytosolic invertase that cleaves sucrose into glucose and fructose and is involved in the regulation of primary root elongation, lateral root formation, floral transition and pollen development. The chain is Cytosolic invertase 1 from Oryza sativa subsp. japonica (Rice).